We begin with the raw amino-acid sequence, 434 residues long: 3-phosphoshikimate 1-carboxyvinyltransferase (434 aa).

Residues lysine 22, serine 23, and arginine 27 each contribute to the 3-phosphoshikimate site. Position 22 (lysine 22) interacts with phosphoenolpyruvate. Phosphoenolpyruvate-binding residues include glycine 94 and arginine 122. Residues serine 167, glutamine 169, aspartate 314, and lysine 341 each coordinate 3-phosphoshikimate. Residue glutamine 169 coordinates phosphoenolpyruvate. Aspartate 314 (proton acceptor) is an active-site residue. 2 residues coordinate phosphoenolpyruvate: arginine 345 and arginine 391.

Belongs to the EPSP synthase family. In terms of assembly, monomer.

Its subcellular location is the cytoplasm. The enzyme catalyses 3-phosphoshikimate + phosphoenolpyruvate = 5-O-(1-carboxyvinyl)-3-phosphoshikimate + phosphate. It participates in metabolic intermediate biosynthesis; chorismate biosynthesis; chorismate from D-erythrose 4-phosphate and phosphoenolpyruvate: step 6/7. Catalyzes the transfer of the enolpyruvyl moiety of phosphoenolpyruvate (PEP) to the 5-hydroxyl of shikimate-3-phosphate (S3P) to produce enolpyruvyl shikimate-3-phosphate and inorganic phosphate. The chain is 3-phosphoshikimate 1-carboxyvinyltransferase from Leuconostoc mesenteroides subsp. mesenteroides (strain ATCC 8293 / DSM 20343 / BCRC 11652 / CCM 1803 / JCM 6124 / NCDO 523 / NBRC 100496 / NCIMB 8023 / NCTC 12954 / NRRL B-1118 / 37Y).